Consider the following 489-residue polypeptide: Probable guanine deaminase (489 aa).

The Zn(2+) site is built by histidine 100 and histidine 102. Substrate is bound by residues 102-105 (HVSQ), 231-232 (RF), 258-261 (HLSE), and aspartate 348. Zn(2+) contacts are provided by histidine 258 and aspartate 348.

Belongs to the metallo-dependent hydrolases superfamily. ATZ/TRZ family. Zn(2+) is required as a cofactor.

Its subcellular location is the cytoplasm. It carries out the reaction guanine + H2O + H(+) = xanthine + NH4(+). It functions in the pathway purine metabolism; guanine degradation; xanthine from guanine: step 1/1. Its function is as follows. Catalyzes the hydrolytic deamination of guanine, producing xanthine and ammonia. The protein is Probable guanine deaminase (GUD1) of Saccharomyces cerevisiae (strain ATCC 204508 / S288c) (Baker's yeast).